Consider the following 93-residue polypeptide: Small ribosomal subunit protein uS19 (93 aa).

Belongs to the universal ribosomal protein uS19 family.

In terms of biological role, protein S19 forms a complex with S13 that binds strongly to the 16S ribosomal RNA. This chain is Small ribosomal subunit protein uS19, found in Citrifermentans bemidjiense (strain ATCC BAA-1014 / DSM 16622 / JCM 12645 / Bem) (Geobacter bemidjiensis).